A 305-amino-acid polypeptide reads, in one-letter code: Protein FdhE homolog (305 aa).

This sequence belongs to the FdhE family.

It is found in the cytoplasm. In terms of biological role, necessary for formate dehydrogenase activity. This chain is Protein FdhE homolog, found in Stutzerimonas stutzeri (strain A1501) (Pseudomonas stutzeri).